A 509-amino-acid chain; its full sequence is MDYDLVMEDEFDALCLDVRRDHDSASKTKYPAKLHARKVVKELGVDDGLIYLPGQPDISLENSDQPRLFRQRRYFFYITGADFEDCAATYEVKHDKLTLWVPYVEPRQVLWFGSKPSAAECKRRYDVDEVRYTTQLSSFLRRFAAQPEPPVVYILHPDQAPDLGHGSQSQLRLDSSLLLPAMDRARVVKSDYEVAMVRRANDISSAAHRRVAERILRLTNEREIEAIIQAVCIANGSRSQAYPIIAGSGANGATLHYGANNAPLGGKQCVVIDAGCEWNCYASDITRTLPLSGSWTPKAAAIHAIVQRMQQECIAKVGPGTAWRDIHLHAASLGMEGLLGLGILKGRREDVARAGTVAAFFPHGLGHHVGLEVHDVSGTLALSAAEGHGTQLDFGKRAMVTPSMLADMTRSASSPDAAGVQERKTQLLLPNMIVTVEPGIYFCREYLEGYFRSDPAHADFIDWDLLEEYYDVGGVRIEDCILVTEDGYENLTVAPKGDELLDVINKGEK.

Mn(2+) is bound by residues D273, D284, E437, and E478.

Belongs to the peptidase M24B family. The cofactor is Mn(2+).

The catalysed reaction is Release of any N-terminal amino acid, including proline, that is linked to proline, even from a dipeptide or tripeptide.. In terms of biological role, catalyzes the removal of a penultimate prolyl residue from the N-termini of peptides. This chain is Probable Xaa-Pro aminopeptidase MAC_04092, found in Metarhizium acridum (strain CQMa 102).